We begin with the raw amino-acid sequence, 225 residues long: UPF0502 protein Ajs_3392 (225 aa).

It belongs to the UPF0502 family.

This is UPF0502 protein Ajs_3392 from Acidovorax sp. (strain JS42).